A 232-amino-acid chain; its full sequence is GTP cyclohydrolase III (232 aa).

It belongs to the archaeal-type GTP cyclohydrolase family.

It carries out the reaction GTP + 3 H2O = 2-amino-5-formylamino-6-(5-phospho-D-ribosylamino)pyrimidin-4(3H)-one + 2 phosphate + 2 H(+). Catalyzes the formation of 2-amino-5-formylamino-6-ribofuranosylamino-4(3H)-pyrimidinone ribonucleotide monophosphate and inorganic phosphate from GTP. Also has an independent pyrophosphate phosphohydrolase activity. The polypeptide is GTP cyclohydrolase III (Saccharolobus islandicus (strain Y.N.15.51 / Yellowstone #2) (Sulfolobus islandicus)).